A 570-amino-acid polypeptide reads, in one-letter code: Hydroxylamine reductase (570 aa).

4 residues coordinate [4Fe-4S] cluster: C5, C8, C17, and C23. Hybrid [4Fe-2O-2S] cluster contacts are provided by H266, E290, C334, C425, C453, C478, E513, and K515. The residue at position 425 (C425) is a Cysteine persulfide.

It belongs to the HCP family. It depends on [4Fe-4S] cluster as a cofactor. Hybrid [4Fe-2O-2S] cluster is required as a cofactor.

Its subcellular location is the cytoplasm. It catalyses the reaction A + NH4(+) + H2O = hydroxylamine + AH2 + H(+). In terms of biological role, catalyzes the reduction of hydroxylamine to form NH(3) and H(2)O. This chain is Hydroxylamine reductase, found in Clostridium botulinum (strain Okra / Type B1).